A 613-amino-acid polypeptide reads, in one-letter code: Dihydroxy-acid dehydratase 3 (613 aa).

Residue Asp-81 participates in Mg(2+) binding. Cys-122 is a [2Fe-2S] cluster binding site. Asp-123 and Lys-124 together coordinate Mg(2+). The residue at position 124 (Lys-124) is an N6-carboxylysine. A [2Fe-2S] cluster-binding site is contributed by Cys-197. Glu-493 contributes to the Mg(2+) binding site. Ser-519 functions as the Proton acceptor in the catalytic mechanism.

This sequence belongs to the IlvD/Edd family. As to quaternary structure, homodimer. [2Fe-2S] cluster is required as a cofactor. The cofactor is Mg(2+).

The catalysed reaction is (2R)-2,3-dihydroxy-3-methylbutanoate = 3-methyl-2-oxobutanoate + H2O. The enzyme catalyses (2R,3R)-2,3-dihydroxy-3-methylpentanoate = (S)-3-methyl-2-oxopentanoate + H2O. It participates in amino-acid biosynthesis; L-isoleucine biosynthesis; L-isoleucine from 2-oxobutanoate: step 3/4. It functions in the pathway amino-acid biosynthesis; L-valine biosynthesis; L-valine from pyruvate: step 3/4. Its function is as follows. Functions in the biosynthesis of branched-chain amino acids. Catalyzes the dehydration of (2R,3R)-2,3-dihydroxy-3-methylpentanoate (2,3-dihydroxy-3-methylvalerate) into 2-oxo-3-methylpentanoate (2-oxo-3-methylvalerate) and of (2R)-2,3-dihydroxy-3-methylbutanoate (2,3-dihydroxyisovalerate) into 2-oxo-3-methylbutanoate (2-oxoisovalerate), the penultimate precursor to L-isoleucine and L-valine, respectively. The chain is Dihydroxy-acid dehydratase 3 from Nocardia farcinica (strain IFM 10152).